A 369-amino-acid polypeptide reads, in one-letter code: Flagellar P-ring protein (369 aa).

The N-terminal stretch at 1–22 is a signal peptide; it reads MIKLKQLIAATLLLSTAFGVHA.

Belongs to the FlgI family. The basal body constitutes a major portion of the flagellar organelle and consists of four rings (L,P,S, and M) mounted on a central rod.

The protein resides in the periplasm. It localises to the bacterial flagellum basal body. Assembles around the rod to form the L-ring and probably protects the motor/basal body from shearing forces during rotation. The polypeptide is Flagellar P-ring protein (Pseudomonas savastanoi pv. phaseolicola (strain 1448A / Race 6) (Pseudomonas syringae pv. phaseolicola (strain 1448A / Race 6))).